Reading from the N-terminus, the 200-residue chain is Glycerol-3-phosphate acyltransferase (200 aa).

5 helical membrane-spanning segments follow: residues 4 to 24 (FALC…AVIV), 53 to 73 (WAAL…VWCG), 80 to 100 (QFEL…PIFF), 115 to 135 (IAPI…LVFV), and 138 to 158 (GYSS…VWWF).

It belongs to the PlsY family. Probably interacts with PlsX.

The protein resides in the cell inner membrane. It catalyses the reaction an acyl phosphate + sn-glycerol 3-phosphate = a 1-acyl-sn-glycero-3-phosphate + phosphate. It participates in lipid metabolism; phospholipid metabolism. Its function is as follows. Catalyzes the transfer of an acyl group from acyl-phosphate (acyl-PO(4)) to glycerol-3-phosphate (G3P) to form lysophosphatidic acid (LPA). This enzyme utilizes acyl-phosphate as fatty acyl donor, but not acyl-CoA or acyl-ACP. This chain is Glycerol-3-phosphate acyltransferase, found in Actinobacillus succinogenes (strain ATCC 55618 / DSM 22257 / CCUG 43843 / 130Z).